The chain runs to 445 residues: Protein cereblon (445 aa).

The tract at residues 1–48 (MAGEGDQQDAAHNMGNHLPLLPADSEDEDDEIEMEVEDQDSKEARKPN) is disordered. Residues 24 to 38 (DSEDEDDEIEMEVED) show a composition bias toward acidic residues. Position 25 is a phosphoserine (Ser-25). The Lon N-terminal domain maps to 84 to 322 (IPVLPEVLMI…CELDIMNKCT (239 aa)). The region spanning 321–429 (CTSLCCKQCQ…LTRSALLPTI (109 aa)) is the CULT domain. 2 residues coordinate Zn(2+): Cys-326 and Cys-329. (S)-thalidomide-binding residues include His-381, Trp-383, and Trp-389. Cys-394 and Cys-397 together coordinate Zn(2+).

Belongs to the CRBN family. Component of a DCX (DDB1-CUL4-X-box) protein ligase complex, at least composed of CRBN, CUL4A, DDB1 and RBX1. Interacts directly with DDB1. Interacts with KCNT1. Interacts with ILF2. Interacts with TRAF6 and ECSIT. In terms of processing, ubiquitinated, ubiquitination is mediated by its own DCX protein ligase complex. Highly expressed in brain.

Its subcellular location is the cytoplasm. It is found in the nucleus. It localises to the membrane. The protein operates within protein modification; protein ubiquitination. Functionally, substrate recognition component of a DCX (DDB1-CUL4-X-box) E3 protein ligase complex that mediates the ubiquitination and subsequent proteasomal degradation of target proteins, such as MEIS2, ILF2 or GLUL. Normal degradation of key regulatory proteins is required for normal limb outgrowth and expression of the fibroblast growth factor FGF8. Maintains presynaptic glutamate release and consequently, cognitive functions such as memory and learning, by negatively regulating large-conductance calcium-activated potassium (BK) channels in excitatory neurons. Likely to function by regulating the assembly and neuronal surface expression of BK channels via its interaction with KCNT1. May also be involved in regulating anxiety-like behaviors via a BK channel-independent mechanism. Plays a negative role in TLR4 signaling by interacting with TRAF6 and ECSIT, leading to inhibition of ECSIT ubiquitination, an important step of the signaling. In Mus musculus (Mouse), this protein is Protein cereblon (Crbn).